Reading from the N-terminus, the 408-residue chain is NADH-quinone oxidoreductase subunit D (408 aa).

It belongs to the complex I 49 kDa subunit family. As to quaternary structure, NDH-1 is composed of 14 different subunits. Subunits NuoB, C, D, E, F, and G constitute the peripheral sector of the complex.

The protein resides in the cell inner membrane. It carries out the reaction a quinone + NADH + 5 H(+)(in) = a quinol + NAD(+) + 4 H(+)(out). In terms of biological role, NDH-1 shuttles electrons from NADH, via FMN and iron-sulfur (Fe-S) centers, to quinones in the respiratory chain. The immediate electron acceptor for the enzyme in this species is believed to be ubiquinone. Couples the redox reaction to proton translocation (for every two electrons transferred, four hydrogen ions are translocated across the cytoplasmic membrane), and thus conserves the redox energy in a proton gradient. The protein is NADH-quinone oxidoreductase subunit D of Campylobacter jejuni subsp. jejuni serotype O:2 (strain ATCC 700819 / NCTC 11168).